Here is a 215-residue protein sequence, read N- to C-terminus: Venom allergen 5.02 (215 aa).

The first 10 residues, 1-10 (PIINLSFGEA), serve as a signal peptide directing secretion. Disulfide bonds link Cys14/Cys26, Cys18/Cys111, Cys36/Cys104, and Cys181/Cys198. Residues 55 to 200 (VNRHNQFRQK…WHTHYLVCNY (146 aa)) form the SCP domain.

Belongs to the CRISP family. Venom allergen 5-like subfamily. In terms of tissue distribution, expressed by the venom gland.

It localises to the secreted. The polypeptide is Venom allergen 5.02 (Dolichovespula maculata (Bald-faced hornet)).